The sequence spans 331 residues: MASVTSVPKTGRSVNQDVPATTLTLQTRPTPAPNFDEGEHLIRVHATALCAGELYWHTYVTFTKEETVPGPDVAGTVVLAPPSSPFKPGDDVYCRIPYSRAGGARDHTIALTSELARKPKNLTWEEAATVPLSALTAWQALFDQSGLWEGPEDERVKGKRVAVTAASGAVGMWILQFARIAGFDAVIGTCGDGNEDFVKSMGATDAVNYKTTSLTAWAAEKQGRKADLVIDCFGGKSLADAWGCVKDGGVLISMVGYPEQEKPAGLEVKDVKSHFFIMEPRGDQLQKVTELVEQGKCSFLMDSVYPLEQFQEATDKVESRRVRGKVVLKVL.

The segment covering 1–29 (MASVTSVPKTGRSVNQDVPATTLTLQTRP) has biased composition (polar residues). The interval 1–34 (MASVTSVPKTGRSVNQDVPATTLTLQTRPTPAPN) is disordered.

Belongs to the zinc-containing alcohol dehydrogenase family. Quinone oxidoreductase subfamily.

The protein resides in the mitochondrion. The sequence is that of Probable zinc-binding oxidoreductase, mitochondrial from Arthroderma benhamiae (strain ATCC MYA-4681 / CBS 112371) (Trichophyton mentagrophytes).